Reading from the N-terminus, the 428-residue chain is 3-oxo-tetronate kinase (428 aa).

Residues serine 267, glycine 365–threonine 368, and glycine 409 contribute to the ATP site.

This sequence belongs to the four-carbon acid sugar kinase family.

It carries out the reaction 3-dehydro-L-erythronate + ATP = 3-dehydro-4-O-phospho-L-erythronate + ADP + H(+). The catalysed reaction is 3-dehydro-D-erythronate + ATP = 3-dehydro-4-O-phospho-D-erythronate + ADP + H(+). In terms of biological role, catalyzes the ATP-dependent phosphorylation of 3-oxo-tetronate to 3-oxo-tetronate 4-phosphate. This is 3-oxo-tetronate kinase from Burkholderia multivorans (strain ATCC 17616 / 249).